A 128-amino-acid chain; its full sequence is Large ribosomal subunit protein uL22 (128 aa).

A disordered region spans residues 1–22; that stretch reads MARGHRSQIKRERNANKDTRPS. Residues 9–21 are compositionally biased toward basic and acidic residues; the sequence is IKRERNANKDTRP.

Belongs to the universal ribosomal protein uL22 family. Part of the 50S ribosomal subunit.

Its function is as follows. This protein binds specifically to 23S rRNA; its binding is stimulated by other ribosomal proteins, e.g. L4, L17, and L20. It is important during the early stages of 50S assembly. It makes multiple contacts with different domains of the 23S rRNA in the assembled 50S subunit and ribosome. In terms of biological role, the globular domain of the protein is located near the polypeptide exit tunnel on the outside of the subunit, while an extended beta-hairpin is found that lines the wall of the exit tunnel in the center of the 70S ribosome. The protein is Large ribosomal subunit protein uL22 of Lachnoclostridium phytofermentans (strain ATCC 700394 / DSM 18823 / ISDg) (Clostridium phytofermentans).